The following is a 408-amino-acid chain: Zinc-regulated transporter 1 (408 aa).

Transmembrane regions (helical) follow at residues 64–84 (IGAI…PLVL), 101–121 (LFAR…HLLA), and 141–161 (WAPG…VLLN). 2 positions are modified to phosphothreonine: Thr-234 and Thr-237. 5 helical membrane passes run 254 to 274 (FIIL…TTAV), 279 to 299 (FKTL…GLGS), 315 to 335 (WVLG…GLGV), 351 to 371 (GVLD…ELLA), and 387 to 407 (LIYL…LGKW).

Belongs to the ZIP transporter (TC 2.A.5) family.

It is found in the endoplasmic reticulum membrane. Functionally, high-affinity zinc transport protein. Regulates intracellular zinc levels. The protein is Zinc-regulated transporter 1 (zrt1) of Schizosaccharomyces pombe (strain 972 / ATCC 24843) (Fission yeast).